A 664-amino-acid polypeptide reads, in one-letter code: Fructose-1,6-bisphosphatase class 3 (664 aa).

The protein belongs to the FBPase class 3 family. The cofactor is Mn(2+).

The enzyme catalyses beta-D-fructose 1,6-bisphosphate + H2O = beta-D-fructose 6-phosphate + phosphate. Its pathway is carbohydrate biosynthesis; gluconeogenesis. This Bacteroides thetaiotaomicron (strain ATCC 29148 / DSM 2079 / JCM 5827 / CCUG 10774 / NCTC 10582 / VPI-5482 / E50) protein is Fructose-1,6-bisphosphatase class 3.